Reading from the N-terminus, the 588-residue chain is Calicin (588 aa).

Residues 28 to 98 (WDMALTVDHH…FYSGKVVISE (71 aa)) form the BTB domain. A BACK domain is found at 133–235 (CLRYLFLAEL…NAVSNKTLMF (103 aa)). A Phosphoserine modification is found at Ser149. 6 Kelch repeats span residues 280–327 (SVVI…AAGR), 328–375 (YIYI…TCGG), 377–423 (VYSV…TKGD), 425–475 (NLYI…SFHQ), 476–525 (DNIL…IGDS), and 526–580 (KVFV…LAKL).

Interacts with CYLC1; the interaction may be relevant for proper acrosome attachment to the nuclear envelope.

It localises to the cytoplasm. The protein resides in the cytoskeleton. Its subcellular location is the perinuclear theca. The protein localises to the calyx. In terms of biological role, required for both nuclear and acrosomal shaping during spermiogenesis. This is Calicin (Ccin) from Rattus norvegicus (Rat).